Reading from the N-terminus, the 320-residue chain is Ferrochelatase (320 aa).

2 residues coordinate Fe cation: histidine 194 and glutamate 275.

The protein belongs to the ferrochelatase family.

It localises to the cytoplasm. The catalysed reaction is heme b + 2 H(+) = protoporphyrin IX + Fe(2+). Its pathway is porphyrin-containing compound metabolism; protoheme biosynthesis; protoheme from protoporphyrin-IX: step 1/1. In terms of biological role, catalyzes the ferrous insertion into protoporphyrin IX. The polypeptide is Ferrochelatase (Xylella fastidiosa (strain M23)).